A 431-amino-acid chain; its full sequence is Guanine nucleotide exchange factor rei-2 (431 aa).

Polar residues predominate over residues 1–21; the sequence is MDETATSSEVTETFVSDPTTR. The interval 1–28 is disordered; sequence MDETATSSEVTETFVSDPTTRQFEEDGH. Coiled coils occupy residues 149–171 and 214–247; these read EVLN…AESL and LEAQ…RISE. The tract at residues 249 to 298 is disordered; it reads IHEERSTGSLESAVSSDQEDQKSDFKSSESLPGNPPPYAPTAPPPYEDKY. The span at 255–264 shows a compositional bias: polar residues; that stretch reads TGSLESAVSS. The span at 281–293 shows a compositional bias: pro residues; sequence GNPPPYAPTAPPP.

The protein belongs to the SH3BP5 family. As to quaternary structure, interacts with rab-11.1. Binds preferentially to the GDP-bound form of rab-11.1.

Its function is as follows. Guanine nucleotide exchange factor for Rab GTPase Rab-11.1. May spatially and temporally regulate the distribution of Rab-11.1 to target membranes during embryogenesis. May play a role in cytokinesis, probably by targeting rab-11.1 to the cleavage furrows. In Caenorhabditis elegans, this protein is Guanine nucleotide exchange factor rei-2.